A 208-amino-acid polypeptide reads, in one-letter code: Small ribosomal subunit protein uS4 (208 aa).

Positions 98 to 160 (RRLDNVVYRM…SKNNVQIQRA (63 aa)) constitute an S4 RNA-binding domain.

The protein belongs to the universal ribosomal protein uS4 family. As to quaternary structure, part of the 30S ribosomal subunit. Contacts protein S5. The interaction surface between S4 and S5 is involved in control of translational fidelity.

Functionally, one of the primary rRNA binding proteins, it binds directly to 16S rRNA where it nucleates assembly of the body of the 30S subunit. Its function is as follows. With S5 and S12 plays an important role in translational accuracy. The chain is Small ribosomal subunit protein uS4 from Nautilia profundicola (strain ATCC BAA-1463 / DSM 18972 / AmH).